Here is a 416-residue protein sequence, read N- to C-terminus: E3 ubiquitin-protein ligase makorin-2 (416 aa).

2 consecutive C3H1-type zinc fingers follow at residues 2–29 (STKQ…HDLA) and 31–58 (SKPS…HTKP). Residues 61–144 (AAGGAVGPAP…DPQTSPEMKP (84 aa)) form a disordered region. Residues 95–123 (HSNEPGKREKKTLVLRDRNLTGLAEDKTP) are compositionally biased toward basic and acidic residues. Phosphoserine is present on Ser139. Residues 165 to 192 (SNEPQLCPYAAAGECRFGDACVYLHGDM) form a C3H1-type 3 zinc finger. Positions 193 to 222 (CEICRLQVLHPFDPEQRKAHEKMCMSTFEH) are makorin-type Cys-His. Residues 238–292 (CSICMEVILEKASASERRFGILSNCSHTYCLSCIRQWRCAKQFENPIIKSCPECR) form an RING-type zinc finger. The C3H1-type 4 zinc finger occupies 321 to 350 (GMGKKACKYFEQGKGTCPFGSKCLYRHAYP).

As to quaternary structure, interacts with PDLIM2 (via LIM zinc-binding domain). Interacts with RELA. Highly expressed in the testis, and lower expression in the brain, thymus, heart, lung, liver, spleen, kidney, ovary, uterus, and seminal vesicle (at protein level). Expressed in primary immune cells, such as CD4-positive and CD8-positive T cells, CD19-positive B cells and CD11c-positive dendritic cells, and in embryonic fibroblasts (at protein level).

The protein resides in the cytoplasm. It localises to the nucleus. The catalysed reaction is S-ubiquitinyl-[E2 ubiquitin-conjugating enzyme]-L-cysteine + [acceptor protein]-L-lysine = [E2 ubiquitin-conjugating enzyme]-L-cysteine + N(6)-ubiquitinyl-[acceptor protein]-L-lysine.. It functions in the pathway protein modification; protein ubiquitination. E3 ubiquitin ligase catalyzing the covalent attachment of ubiquitin moieties onto substrate proteins. Promotes the polyubiquitination and proteasome-dependent degradation of RELA/p65, thereby suppressing RELA-mediated NF-kappa-B transactivation and negatively regulating inflammatory responses. Plays a role in the regulation of spermiation and in male fertility. This chain is E3 ubiquitin-protein ligase makorin-2 (Mkrn2), found in Mus musculus (Mouse).